The chain runs to 72 residues: SRY-related protein AES2 (72 aa).

The HMG box DNA-binding region spans 1 to 69; it reads VKRPMNAFMV…KHMADYPDYK (69 aa).

The protein localises to the nucleus. The protein is SRY-related protein AES2 of Alligator mississippiensis (American alligator).